The following is a 502-amino-acid chain: MFS-type transporeter aprT (502 aa).

Positions 1 to 38 (MASPELASHHSDPSDGEGAPFLPGVDDESPESLNSDIP) are disordered. Transmembrane regions (helical) follow at residues 45–65 (HGLIIKLFVIYLAIGMGGPMI), 114–136 (IGYREFFNAFLTSTFALPYGLLA), 150–170 (VGFVFNSVLSFAPIWLPNIFP), 175–195 (WFGAVGWVLGGGPVLLFALFW), 214–234 (FGIATVSAGFLANVTSSFVMK), 239–259 (VPLMTGCGLLFAGLLVANLLP), 302–322 (VAVILPAFFVTQLAGGSAFLV), 336–356 (ATLLVALQHAFTIPVLFFILP), 380–400 (VMLLALGLFGIGLSSSINTLI), 403–423 (LLLHAGGAGFVLIARGLITGL), and 464–484 (LWIGLPWLIVSFLLALIALVL). The N-linked (GlcNAc...) asparagine glycan is linked to N495.

Belongs to the major facilitator superfamily.

It localises to the cell membrane. In terms of biological role, MFS-rype transporer; part of the gene cluster that mediates the biosynthesis of the asperipin-2a, a bicyclic peptide that possesses two macrocyclic ether rings consisting of 14- and 17-membered paracyclophans. AprT is likely to be involved in the cellular export of asperipin-2a. In Aspergillus flavus (strain ATCC 200026 / FGSC A1120 / IAM 13836 / NRRL 3357 / JCM 12722 / SRRC 167), this protein is MFS-type transporeter aprT.